A 76-amino-acid polypeptide reads, in one-letter code: UPF0291 protein BT9727_1737 (76 aa).

This sequence belongs to the UPF0291 family.

The protein localises to the cytoplasm. The chain is UPF0291 protein BT9727_1737 from Bacillus thuringiensis subsp. konkukian (strain 97-27).